A 596-amino-acid chain; its full sequence is Aspartate--tRNA(Asp/Asn) ligase (596 aa).

E169 lines the L-aspartate pocket. Positions 193 to 196 are aspartate; that stretch reads QLFK. R215 lines the L-aspartate pocket. Residues 215-217 and Q224 each bind ATP; that span reads RDE. Position 447 (H447) interacts with L-aspartate. E481 contributes to the ATP binding site. R488 is an L-aspartate binding site. 533 to 536 serves as a coordination point for ATP; the sequence is GWDR. The interval 559-596 is disordered; it reads GYDPLTQAPAPITAQQRKEAGVDFKPEAKKADPGATKA. Over residues 574–590 the composition is skewed to basic and acidic residues; it reads QRKEAGVDFKPEAKKAD.

It belongs to the class-II aminoacyl-tRNA synthetase family. Type 1 subfamily. As to quaternary structure, homodimer.

Its subcellular location is the cytoplasm. The enzyme catalyses tRNA(Asx) + L-aspartate + ATP = L-aspartyl-tRNA(Asx) + AMP + diphosphate. In terms of biological role, aspartyl-tRNA synthetase with relaxed tRNA specificity since it is able to aspartylate not only its cognate tRNA(Asp) but also tRNA(Asn). Reaction proceeds in two steps: L-aspartate is first activated by ATP to form Asp-AMP and then transferred to the acceptor end of tRNA(Asp/Asn). This chain is Aspartate--tRNA(Asp/Asn) ligase, found in Arthrobacter sp. (strain FB24).